A 217-amino-acid chain; its full sequence is MLEESSEPGWLSEEVKTGTTIIAIEFDGGVVLGSDSRVSAGETVVNRVMNKLSLLHDKIYCALSGSAADAQTIAEMVNYQLDVHSIEVGEDPQVRSAATLVKNISYKYKEELSAHLIVAGWDKRGGGQVYVTLNGLLSRQPFAVGGSGSAYVYGFVDAEYRKAMSKEDCQQFVVNTLSLAMSRDGSSGGVAYLVTIDEKGAEEKCILGNELPTFYDQ.

Residues Met1 to Gly18 constitute a propeptide, removed in mature form. Thr19 acts as the Nucleophile in catalysis.

Belongs to the peptidase T1B family. As to quaternary structure, the 26S proteasome consists of a 20S proteasome core and two 19S regulatory subunits. The 20S proteasome core is composed of 28 subunits that are arranged in four stacked rings, resulting in a barrel-shaped structure. The two end rings are each formed by seven alpha subunits, and the two central rings are each formed by seven beta subunits. The catalytic chamber with the active sites is on the inside of the barrel. Component of the immunoproteasome, where it displaces the equivalent housekeeping subunit PSMB6. In terms of processing, autocleaved. The resulting N-terminal Thr residue of the mature subunit is responsible for the nucleophile proteolytic activity.

It is found in the cytoplasm. It localises to the nucleus. The enzyme catalyses Cleavage of peptide bonds with very broad specificity.. Its function is as follows. The proteasome is a multicatalytic proteinase complex which is characterized by its ability to cleave peptides with Arg, Phe, Tyr, Leu, and Glu adjacent to the leaving group at neutral or slightly basic pH. The proteasome has an ATP-dependent proteolytic activity. This subunit is involved in antigen processing to generate class I binding peptides. In Salmo salar (Atlantic salmon), this protein is Proteasome subunit beta type-9 (psmb9-a).